A 613-amino-acid polypeptide reads, in one-letter code: Dihydroxy-acid dehydratase (613 aa).

Mg(2+) is bound at residue aspartate 81. Residue cysteine 122 coordinates [2Fe-2S] cluster. 2 residues coordinate Mg(2+): aspartate 123 and lysine 124. Lysine 124 is modified (N6-carboxylysine). Residue cysteine 193 coordinates [2Fe-2S] cluster. Mg(2+) is bound at residue glutamate 489. Residue serine 515 is the Proton acceptor of the active site.

The protein belongs to the IlvD/Edd family. As to quaternary structure, homodimer. Requires [2Fe-2S] cluster as cofactor. It depends on Mg(2+) as a cofactor.

It catalyses the reaction (2R)-2,3-dihydroxy-3-methylbutanoate = 3-methyl-2-oxobutanoate + H2O. It carries out the reaction (2R,3R)-2,3-dihydroxy-3-methylpentanoate = (S)-3-methyl-2-oxopentanoate + H2O. The protein operates within amino-acid biosynthesis; L-isoleucine biosynthesis; L-isoleucine from 2-oxobutanoate: step 3/4. It participates in amino-acid biosynthesis; L-valine biosynthesis; L-valine from pyruvate: step 3/4. Its function is as follows. Functions in the biosynthesis of branched-chain amino acids. Catalyzes the dehydration of (2R,3R)-2,3-dihydroxy-3-methylpentanoate (2,3-dihydroxy-3-methylvalerate) into 2-oxo-3-methylpentanoate (2-oxo-3-methylvalerate) and of (2R)-2,3-dihydroxy-3-methylbutanoate (2,3-dihydroxyisovalerate) into 2-oxo-3-methylbutanoate (2-oxoisovalerate), the penultimate precursor to L-isoleucine and L-valine, respectively. The protein is Dihydroxy-acid dehydratase of Pseudomonas putida (strain ATCC 47054 / DSM 6125 / CFBP 8728 / NCIMB 11950 / KT2440).